The chain runs to 239 residues: Serine protease SplF (239 aa).

An N-terminal signal peptide occupies residues 1-36; that stretch reads MNKNIIIKSIAALTILTSITGVGTTVVDGIQQTAKA. Active-site charge relay system residues include histidine 75, aspartate 114, and serine 192.

Belongs to the peptidase S1B family.

It localises to the secreted. The polypeptide is Serine protease SplF (splF) (Staphylococcus aureus (strain JH9)).